A 282-amino-acid chain; its full sequence is Aldo-keto reductase MUL_1987 (282 aa).

The Proton donor role is filled by Y57. The NADPH site is built by L197, I235, S238, T246, N247, and R273.

This sequence belongs to the aldo/keto reductase family.

The sequence is that of Aldo-keto reductase MUL_1987 from Mycobacterium ulcerans (strain Agy99).